A 577-amino-acid chain; its full sequence is Arginine--tRNA ligase (577 aa).

The 'HIGH' region motif lies at 122–132 (PNVAKEMHVGH).

It belongs to the class-I aminoacyl-tRNA synthetase family. As to quaternary structure, monomer.

It is found in the cytoplasm. The catalysed reaction is tRNA(Arg) + L-arginine + ATP = L-arginyl-tRNA(Arg) + AMP + diphosphate. This chain is Arginine--tRNA ligase, found in Escherichia coli O139:H28 (strain E24377A / ETEC).